A 236-amino-acid chain; its full sequence is Small ribosomal subunit protein eS6 (236 aa).

Belongs to the eukaryotic ribosomal protein eS6 family. In terms of assembly, component of the small ribosomal subunit. Part of the small subunit (SSU) processome, composed of more than 70 proteins and the RNA chaperone small nucleolar RNA (snoRNA) U3. Ribosomal protein S6 is the major substrate of protein kinases in eukaryote ribosomes.

It localises to the cytoplasm. The protein resides in the nucleus. Its subcellular location is the nucleolus. Functionally, component of the 40S small ribosomal subunit. Plays an important role in controlling cell growth and proliferation through the selective translation of particular classes of mRNA. Part of the small subunit (SSU) processome, first precursor of the small eukaryotic ribosomal subunit. During the assembly of the SSU processome in the nucleolus, many ribosome biogenesis factors, an RNA chaperone and ribosomal proteins associate with the nascent pre-rRNA and work in concert to generate RNA folding, modifications, rearrangements and cleavage as well as targeted degradation of pre-ribosomal RNA by the RNA exosome. This Dictyostelium discoideum (Social amoeba) protein is Small ribosomal subunit protein eS6 (rps6).